Reading from the N-terminus, the 371-residue chain is Cytochrome b (371 aa).

The next 4 helical transmembrane spans lie at 25 to 45 (FGSM…FLAI), 69 to 90 (WMMQ…YIHI), 105 to 125 (WMSG…GYVL), and 170 to 190 (FFAL…LHII). Residues His75 and His89 each contribute to the heme b site. Residues His174 and His188 each contribute to the heme b site. His193 is an a ubiquinone binding site. Transmembrane regions (helical) follow at residues 218 to 238 (HKDL…VSFL), 280 to 300 (LGGA…PFTH), 312 to 332 (LSQL…WAAT), and 339 to 358 (FIII…LSTP).

This sequence belongs to the cytochrome b family. As to quaternary structure, the cytochrome bc1 complex contains 3 respiratory subunits (MT-CYB, CYC1 and UQCRFS1), 2 core proteins (UQCRC1 and UQCRC2) and probably 6 low-molecular weight proteins. It depends on heme b as a cofactor.

It is found in the mitochondrion inner membrane. Functionally, component of the ubiquinol-cytochrome c reductase complex (complex III or cytochrome b-c1 complex) that is part of the mitochondrial respiratory chain. The b-c1 complex mediates electron transfer from ubiquinol to cytochrome c. Contributes to the generation of a proton gradient across the mitochondrial membrane that is then used for ATP synthesis. The chain is Cytochrome b (MT-CYB) from Antaresia maculosa (Eastern small blotched python).